The chain runs to 220 residues: Chaperone protein TorD (220 aa).

The protein belongs to the TorD/DmsD family. TorD subfamily.

The protein localises to the cytoplasm. Functionally, involved in the biogenesis of TorA. Acts on TorA before the insertion of the molybdenum cofactor and, as a result, probably favors a conformation of the apoenzyme that is competent for acquiring the cofactor. The polypeptide is Chaperone protein TorD (Vibrio cholerae serotype O1 (strain M66-2)).